A 351-amino-acid chain; its full sequence is Peptide chain release factor 1 (351 aa).

Position 229 is an N5-methylglutamine (Gln229).

The protein belongs to the prokaryotic/mitochondrial release factor family. Methylated by PrmC. Methylation increases the termination efficiency of RF1.

Its subcellular location is the cytoplasm. Peptide chain release factor 1 directs the termination of translation in response to the peptide chain termination codons UAG and UAA. This chain is Peptide chain release factor 1, found in Cereibacter sphaeroides (strain ATCC 17025 / ATH 2.4.3) (Rhodobacter sphaeroides).